Consider the following 467-residue polypeptide: ATP synthase subunit beta, sodium ion specific (467 aa).

G151–T158 contacts ATP.

It belongs to the ATPase alpha/beta chains family. In terms of assembly, F-type ATPases have 2 components, CF(1) - the catalytic core - and CF(0) - the membrane proton channel. CF(1) has five subunits: alpha(3), beta(3), gamma(1), delta(1), epsilon(1). CF(0) has three main subunits: a, b and c.

Its subcellular location is the cell membrane. It catalyses the reaction 4 Na(+)(in) + ATP + H2O = 4 Na(+)(out) + ADP + phosphate + H(+). Functionally, produces ATP from ADP in the presence of a sodium ion gradient across the membrane. The beta chain is the catalytic subunit. In Propionigenium modestum, this protein is ATP synthase subunit beta, sodium ion specific.